Consider the following 276-residue polypeptide: NADPH-dependent 7-cyano-7-deazaguanine reductase (276 aa).

83 to 85 (IES) provides a ligand contact to substrate. An NADPH-binding site is contributed by 85 to 86 (SK). Residue cysteine 184 is the Thioimide intermediate of the active site. The Proton donor role is filled by aspartate 191. Residue 223 to 224 (HE) coordinates substrate. 252 to 253 (RG) is an NADPH binding site.

This sequence belongs to the GTP cyclohydrolase I family. QueF type 2 subfamily. Homodimer.

It localises to the cytoplasm. It carries out the reaction 7-aminomethyl-7-carbaguanine + 2 NADP(+) = 7-cyano-7-deazaguanine + 2 NADPH + 3 H(+). It participates in tRNA modification; tRNA-queuosine biosynthesis. In terms of biological role, catalyzes the NADPH-dependent reduction of 7-cyano-7-deazaguanine (preQ0) to 7-aminomethyl-7-deazaguanine (preQ1). This is NADPH-dependent 7-cyano-7-deazaguanine reductase from Pseudomonas savastanoi pv. phaseolicola (strain 1448A / Race 6) (Pseudomonas syringae pv. phaseolicola (strain 1448A / Race 6)).